The primary structure comprises 142 residues: Large ribosomal subunit protein uL16 (142 aa).

Residues 1–14 (MLSPRRTKFRKQQR) are compositionally biased toward basic residues. Residues 1-22 (MLSPRRTKFRKQQRGRMTGKAT) form a disordered region.

The protein belongs to the universal ribosomal protein uL16 family. As to quaternary structure, part of the 50S ribosomal subunit.

Binds 23S rRNA and is also seen to make contacts with the A and possibly P site tRNAs. The chain is Large ribosomal subunit protein uL16 from Synechococcus elongatus (strain ATCC 33912 / PCC 7942 / FACHB-805) (Anacystis nidulans R2).